Here is a 318-residue protein sequence, read N- to C-terminus: Pyrimidine-specific ribonucleoside hydrolase RihA (318 aa).

Histidine 240 is an active-site residue.

The protein belongs to the IUNH family. RihA subfamily.

In terms of biological role, hydrolyzes cytidine or uridine to ribose and cytosine or uracil, respectively. This is Pyrimidine-specific ribonucleoside hydrolase RihA from Shewanella oneidensis (strain ATCC 700550 / JCM 31522 / CIP 106686 / LMG 19005 / NCIMB 14063 / MR-1).